Here is a 205-residue protein sequence, read N- to C-terminus: Imidazole glycerol phosphate synthase subunit HisH (205 aa).

A Glutamine amidotransferase type-1 domain is found at 3-205; the sequence is KIGLIDYGMG…LLRRWLSNIQ (203 aa). The active-site Nucleophile is Cys81. Catalysis depends on residues His185 and Glu187.

In terms of assembly, heterodimer of HisH and HisF.

The protein resides in the cytoplasm. The enzyme catalyses 5-[(5-phospho-1-deoxy-D-ribulos-1-ylimino)methylamino]-1-(5-phospho-beta-D-ribosyl)imidazole-4-carboxamide + L-glutamine = D-erythro-1-(imidazol-4-yl)glycerol 3-phosphate + 5-amino-1-(5-phospho-beta-D-ribosyl)imidazole-4-carboxamide + L-glutamate + H(+). It catalyses the reaction L-glutamine + H2O = L-glutamate + NH4(+). It participates in amino-acid biosynthesis; L-histidine biosynthesis; L-histidine from 5-phospho-alpha-D-ribose 1-diphosphate: step 5/9. In terms of biological role, IGPS catalyzes the conversion of PRFAR and glutamine to IGP, AICAR and glutamate. The HisH subunit catalyzes the hydrolysis of glutamine to glutamate and ammonia as part of the synthesis of IGP and AICAR. The resulting ammonia molecule is channeled to the active site of HisF. The sequence is that of Imidazole glycerol phosphate synthase subunit HisH from Prochlorococcus marinus (strain MIT 9312).